The chain runs to 274 residues: Exosome complex component Rrp42 (274 aa).

The protein belongs to the RNase PH family. Rrp42 subfamily. Component of the archaeal exosome complex. Forms a hexameric ring-like arrangement composed of 3 Rrp41-Rrp42 heterodimers. The hexameric ring associates with a trimer of Rrp4 and/or Csl4 subunits.

The protein resides in the cytoplasm. Functionally, non-catalytic component of the exosome, which is a complex involved in RNA degradation. Contributes to the structuring of the Rrp41 active site. The protein is Exosome complex component Rrp42 of Pyrococcus horikoshii (strain ATCC 700860 / DSM 12428 / JCM 9974 / NBRC 100139 / OT-3).